A 73-amino-acid polypeptide reads, in one-letter code: Heterin-2 (73 aa).

The signal sequence occupies residues Met-1–Ala-22. Positions Lys-47–Gln-73 are excised as a propeptide.

This sequence belongs to the non-disulfide-bridged peptide (NDBP) superfamily. Medium-length antimicrobial peptide (group 3) family. In terms of tissue distribution, expressed by the venom gland.

It localises to the secreted. Its subcellular location is the target cell membrane. Functionally, amphipathic peptide with potent activities against Gram-positive bacteria (MIC=5.6-30.0 uM) and weaker activities against the tested Gram-negative bacteria (MIC=15 uM to &gt;45 uM). It has high hemolytic activity against human erythrocytes. May act by disrupting the integrity of the bacterial cell membrane. This chain is Heterin-2, found in Heterometrus spinifer (Asia giant forest scorpion).